Consider the following 82-residue polypeptide: Acyl carrier protein (82 aa).

Residues 4–79 (PEMEERLRKI…DALNYLETHQ (76 aa)) form the Carrier domain. At Ser39 the chain carries O-(pantetheine 4'-phosphoryl)serine.

Belongs to the acyl carrier protein (ACP) family. Post-translationally, 4'-phosphopantetheine is transferred from CoA to a specific serine of apo-ACP by AcpS. This modification is essential for activity because fatty acids are bound in thioester linkage to the sulfhydryl of the prosthetic group.

It localises to the cytoplasm. It functions in the pathway lipid metabolism; fatty acid biosynthesis. Carrier of the growing fatty acid chain in fatty acid biosynthesis. This Chloroflexus aurantiacus (strain ATCC 29366 / DSM 635 / J-10-fl) protein is Acyl carrier protein.